The primary structure comprises 520 residues: Probable methylmalonate-semialdehyde/malonate-semialdehyde dehydrogenase [acylating], mitochondrial (520 aa).

Residues Ala-169, Phe-171, Lys-195, Glu-198, Arg-199, and Ser-248 each contribute to the NAD(+) site. The Nucleophile role is filled by Cys-303. Glu-403 is a binding site for NAD(+).

The protein belongs to the aldehyde dehydrogenase family. Homotetramer.

It is found in the mitochondrion. It catalyses the reaction 2-methyl-3-oxopropanoate + NAD(+) + CoA + H2O = propanoyl-CoA + hydrogencarbonate + NADH + H(+). The catalysed reaction is 3-oxopropanoate + NAD(+) + CoA + H2O = hydrogencarbonate + acetyl-CoA + NADH + H(+). In terms of biological role, probable malonate and methylmalonate semialdehyde dehydrogenase involved in the catabolism of valine, thymine, and compounds catabolized by way of beta-alanine, including uracil and cytidine. In Drosophila pseudoobscura pseudoobscura (Fruit fly), this protein is Probable methylmalonate-semialdehyde/malonate-semialdehyde dehydrogenase [acylating], mitochondrial.